Consider the following 207-residue polypeptide: Small ribosomal subunit protein uS5 (207 aa).

The interval 1–51 (MTDTPTKQEITSKNDKVPGAIPGEQKKNNRNNDRKRNRRGDSKNLERDSDW) is disordered. The segment covering 24-51 (EQKKNNRNNDRKRNRRGDSKNLERDSDW) has biased composition (basic and acidic residues). An S5 DRBM domain is found at 51–114 (WQERVVQIRR…SDGKKNLVRV (64 aa)).

This sequence belongs to the universal ribosomal protein uS5 family. Part of the 30S ribosomal subunit. Contacts proteins S4 and S8.

With S4 and S12 plays an important role in translational accuracy. Its function is as follows. Located at the back of the 30S subunit body where it stabilizes the conformation of the head with respect to the body. This chain is Small ribosomal subunit protein uS5, found in Prochlorococcus marinus (strain MIT 9312).